Consider the following 445-residue polypeptide: Phosphoglucosamine mutase (445 aa).

Serine 104 (phosphoserine intermediate) is an active-site residue. Residues serine 104, aspartate 243, aspartate 245, and aspartate 247 each coordinate Mg(2+). Serine 104 is subject to Phosphoserine.

The protein belongs to the phosphohexose mutase family. Mg(2+) is required as a cofactor. Post-translationally, activated by phosphorylation.

It carries out the reaction alpha-D-glucosamine 1-phosphate = D-glucosamine 6-phosphate. Catalyzes the conversion of glucosamine-6-phosphate to glucosamine-1-phosphate. The chain is Phosphoglucosamine mutase from Neisseria subflava.